Reading from the N-terminus, the 64-residue chain is Alpha-mammal toxin BmK-M8 (64 aa).

The 63-residue stretch at 2 to 64 folds into the LCN-type CS-alpha/beta domain; sequence RDAYIADSEN…ERIKEPGKCG (63 aa). 4 disulfides stabilise this stretch: Cys12/Cys63, Cys16/Cys36, Cys22/Cys46, and Cys26/Cys48.

Belongs to the long (4 C-C) scorpion toxin superfamily. Sodium channel inhibitor family. Alpha subfamily. As to expression, expressed by the venom gland.

It localises to the secreted. Its function is as follows. Alpha toxins bind voltage-independently at site-3 of sodium channels (Nav) and inhibit the inactivation of the activated channels, thereby blocking neuronal transmission. This acidic toxin has a weak toxicity and is active against mammals. The protein is Alpha-mammal toxin BmK-M8 of Olivierus martensii (Manchurian scorpion).